The primary structure comprises 399 residues: Argininosuccinate synthase (399 aa).

An ATP-binding site is contributed by 8–16; it reads AYSGGLDTS. Y87 serves as a coordination point for L-citrulline. Residue G117 coordinates ATP. L-aspartate is bound by residues T119, N123, and D124. Residue N123 coordinates L-citrulline. Residues R127, S175, E260, and Y272 each contribute to the L-citrulline site.

Belongs to the argininosuccinate synthase family. Type 1 subfamily. As to quaternary structure, homotetramer.

The protein localises to the cytoplasm. It catalyses the reaction L-citrulline + L-aspartate + ATP = 2-(N(omega)-L-arginino)succinate + AMP + diphosphate + H(+). The protein operates within amino-acid biosynthesis; L-arginine biosynthesis; L-arginine from L-ornithine and carbamoyl phosphate: step 2/3. The chain is Argininosuccinate synthase from Mycolicibacterium smegmatis (strain ATCC 700084 / mc(2)155) (Mycobacterium smegmatis).